We begin with the raw amino-acid sequence, 299 residues long: HTH-type transcriptional regulator ArgP (299 aa).

The region spanning 4-60 (LDYKLLLALDAVMQEQNFERAAQRLHITQSAISQRIKQLEQQFAEPLLIRSQPLQAT) is the HTH lysR-type domain. The H-T-H motif DNA-binding region spans 21-40 (FERAAQRLHITQSAISQRIK).

It belongs to the LysR transcriptional regulatory family. Homodimer.

Functionally, controls the transcription of genes involved in arginine and lysine metabolism. The chain is HTH-type transcriptional regulator ArgP from Aeromonas salmonicida.